A 540-amino-acid polypeptide reads, in one-letter code: Putative cysteine ligase BshC (540 aa).

Residues 425 to 453 adopt a coiled-coil conformation; sequence IEKVEGMIEQQRRLNKDLLDEVAGNQNNI.

Belongs to the BshC family.

Involved in bacillithiol (BSH) biosynthesis. May catalyze the last step of the pathway, the addition of cysteine to glucosamine malate (GlcN-Mal) to generate BSH. The polypeptide is Putative cysteine ligase BshC (Staphylococcus aureus (strain NCTC 8325 / PS 47)).